The sequence spans 235 residues: ATP-dependent dethiobiotin synthetase BioD (235 aa).

12–17 serves as a coordination point for ATP; it reads GVGKTF. Mg(2+) is bound at residue Thr-16. The active site involves Lys-37. Ser-41 is a binding site for substrate. ATP contacts are provided by residues Asp-51, 112–115, and 202–204; these read EGAG and PKL. Residues Asp-51 and Glu-112 each coordinate Mg(2+).

The protein belongs to the dethiobiotin synthetase family. As to quaternary structure, homodimer. Mg(2+) serves as cofactor.

The protein resides in the cytoplasm. The enzyme catalyses (7R,8S)-7,8-diammoniononanoate + CO2 + ATP = (4R,5S)-dethiobiotin + ADP + phosphate + 3 H(+). It functions in the pathway cofactor biosynthesis; biotin biosynthesis; biotin from 7,8-diaminononanoate: step 1/2. In terms of biological role, catalyzes a mechanistically unusual reaction, the ATP-dependent insertion of CO2 between the N7 and N8 nitrogen atoms of 7,8-diaminopelargonic acid (DAPA, also called 7,8-diammoniononanoate) to form a ureido ring. The chain is ATP-dependent dethiobiotin synthetase BioD from Bacillus licheniformis (strain ATCC 14580 / DSM 13 / JCM 2505 / CCUG 7422 / NBRC 12200 / NCIMB 9375 / NCTC 10341 / NRRL NRS-1264 / Gibson 46).